A 515-amino-acid polypeptide reads, in one-letter code: GMP synthase [glutamine-hydrolyzing] (515 aa).

The region spanning 10–200 is the Glutamine amidotransferase type-1 domain; sequence TIIVLDFGSQ…VFGVCGCSEG (191 aa). The Nucleophile role is filled by cysteine 87. Active-site residues include histidine 174 and glutamate 176. The GMPS ATP-PPase domain occupies 201–390; that stretch reads WNMENFIEVE…LGIPDEIVWR (190 aa). 228–234 is an ATP binding site; sequence SGGVDSS.

In terms of assembly, homodimer.

It catalyses the reaction XMP + L-glutamine + ATP + H2O = GMP + L-glutamate + AMP + diphosphate + 2 H(+). It functions in the pathway purine metabolism; GMP biosynthesis; GMP from XMP (L-Gln route): step 1/1. Functionally, catalyzes the synthesis of GMP from XMP. This is GMP synthase [glutamine-hydrolyzing] from Bacillus anthracis (strain A0248).